An 88-amino-acid chain; its full sequence is Small ribosomal subunit protein uS15 (88 aa).

The protein belongs to the universal ribosomal protein uS15 family. Part of the 30S ribosomal subunit. Forms a bridge to the 50S subunit in the 70S ribosome, contacting the 23S rRNA.

One of the primary rRNA binding proteins, it binds directly to 16S rRNA where it helps nucleate assembly of the platform of the 30S subunit by binding and bridging several RNA helices of the 16S rRNA. In terms of biological role, forms an intersubunit bridge (bridge B4) with the 23S rRNA of the 50S subunit in the ribosome. This is Small ribosomal subunit protein uS15 from Albidiferax ferrireducens (strain ATCC BAA-621 / DSM 15236 / T118) (Rhodoferax ferrireducens).